Reading from the N-terminus, the 494-residue chain is UPF0371 protein SSA_0208 (494 aa).

Belongs to the UPF0371 family.

This chain is UPF0371 protein SSA_0208, found in Streptococcus sanguinis (strain SK36).